The chain runs to 179 residues: Photosystem I assembly protein Ycf4 (179 aa).

Transmembrane regions (helical) follow at residues 21-41 (LISF…YLGV) and 59-79 (IVMT…LLNI).

The protein belongs to the Ycf4 family.

It is found in the plastid. The protein localises to the chloroplast thylakoid membrane. Seems to be required for the assembly of the photosystem I complex. This chain is Photosystem I assembly protein Ycf4, found in Rhodomonas salina (Cryptomonas salina).